Consider the following 389-residue polypeptide: Chalcone synthase (389 aa).

Catalysis depends on residues cysteine 164, histidine 303, and asparagine 336.

The protein belongs to the thiolase-like superfamily. Chalcone/stilbene synthases family. In terms of assembly, homodimer. Mainly expressed in flowers, to a lower extent in young leaves, and barely in mature leaves and twigs.

It carries out the reaction (E)-4-coumaroyl-CoA + 3 malonyl-CoA + 3 H(+) = 2',4,4',6'-tetrahydroxychalcone + 3 CO2 + 4 CoA. Its pathway is secondary metabolite biosynthesis; flavonoid biosynthesis. Functionally, the primary product of this enzyme is 4,2',4',6'-tetrahydroxychalcone (also termed naringenin-chalcone or chalcone) which can under specific conditions spontaneously isomerize into naringenin. This chain is Chalcone synthase, found in Rhododendron dauricum (Azalea daurica).